The chain runs to 304 residues: Cell surface-binding protein OPG105 (304 aa).

In terms of domain architecture, Alpha-carbonic anhydrase spans 1–235 (MPQQLSPINI…NDDTQVYYSG (235 aa)). Over 1-275 (MPQQLSPINI…YQKYIEGNKT (275 aa)) the chain is Virion surface. The helical transmembrane segment at 276–294 (FAIIAIVFVFILTAILFFM) threads the bilayer. At 295–304 (SQRYSREKQN) the chain is on the intravirion side.

It belongs to the alpha-carbonic anhydrase family. In terms of assembly, homodimer; disulfide-linked. Apparently non-glycosylated.

Its subcellular location is the virion membrane. In terms of biological role, binds to chondroitin sulfate on the cell surface to provide virion attachment to target cell. The sequence is that of Cell surface-binding protein OPG105 (OPG105) from Vaccinia virus (strain Ankara) (VACV).